Consider the following 396-residue polypeptide: Lipid-A-disaccharide synthase (396 aa).

This sequence belongs to the LpxB family.

The catalysed reaction is a lipid X + a UDP-2-N,3-O-bis[(3R)-3-hydroxyacyl]-alpha-D-glucosamine = a lipid A disaccharide + UDP + H(+). The protein operates within bacterial outer membrane biogenesis; LPS lipid A biosynthesis. Condensation of UDP-2,3-diacylglucosamine and 2,3-diacylglucosamine-1-phosphate to form lipid A disaccharide, a precursor of lipid A, a phosphorylated glycolipid that anchors the lipopolysaccharide to the outer membrane of the cell. This chain is Lipid-A-disaccharide synthase, found in Nitrobacter winogradskyi (strain ATCC 25391 / DSM 10237 / CIP 104748 / NCIMB 11846 / Nb-255).